The primary structure comprises 522 residues: Protein nucleotidyltransferase YdiU (522 aa).

Gly-109, Gly-111, Arg-112, Lys-132, Asp-144, Gly-145, Arg-195, and Arg-202 together coordinate ATP. Asp-271 serves as the catalytic Proton acceptor. The Mg(2+) site is built by Asn-272 and Asp-281. Asp-281 contacts ATP.

Belongs to the SELO family. Mg(2+) serves as cofactor. Requires Mn(2+) as cofactor.

The catalysed reaction is L-seryl-[protein] + ATP = 3-O-(5'-adenylyl)-L-seryl-[protein] + diphosphate. It carries out the reaction L-threonyl-[protein] + ATP = 3-O-(5'-adenylyl)-L-threonyl-[protein] + diphosphate. The enzyme catalyses L-tyrosyl-[protein] + ATP = O-(5'-adenylyl)-L-tyrosyl-[protein] + diphosphate. It catalyses the reaction L-histidyl-[protein] + UTP = N(tele)-(5'-uridylyl)-L-histidyl-[protein] + diphosphate. The catalysed reaction is L-seryl-[protein] + UTP = O-(5'-uridylyl)-L-seryl-[protein] + diphosphate. It carries out the reaction L-tyrosyl-[protein] + UTP = O-(5'-uridylyl)-L-tyrosyl-[protein] + diphosphate. Functionally, nucleotidyltransferase involved in the post-translational modification of proteins. It can catalyze the addition of adenosine monophosphate (AMP) or uridine monophosphate (UMP) to a protein, resulting in modifications known as AMPylation and UMPylation. This is Protein nucleotidyltransferase YdiU from Burkholderia ambifaria (strain ATCC BAA-244 / DSM 16087 / CCUG 44356 / LMG 19182 / AMMD) (Burkholderia cepacia (strain AMMD)).